The chain runs to 204 residues: Large ribosomal subunit protein uL22m (204 aa).

Residues 1–38 (MAAVILERLGALWVQNLRGKLALGILPQSHIHTSASLE) constitute a mitochondrion transit peptide.

This sequence belongs to the universal ribosomal protein uL22 family. In terms of assembly, component of the mitochondrial ribosome large subunit (39S) which comprises a 16S rRNA and about 50 distinct proteins.

It is found in the mitochondrion. The sequence is that of Large ribosomal subunit protein uL22m (MRPL22) from Bos taurus (Bovine).